Here is a 518-residue protein sequence, read N- to C-terminus: Major facilitator superfamily multidrug transporter mfsC (518 aa).

The next 7 helical transmembrane spans lie at 27-47 (VLLT…SVLF), 65-85 (WVLI…GQLG), 88-108 (FGLE…NVIN), 123-143 (ISGV…SNTF), 152-172 (ALAI…VVGS), 183-203 (IFWL…LFLP), and 212-232 (PIDI…VYGL). Residue N233 is glycosylated (N-linked (GlcNAc...) asparagine). 7 helical membrane-spanning segments follow: residues 242–262 (SAAM…FLWV), 281–301 (FLVM…WFFI), 315–335 (ILTA…GVFA), 347–367 (ILVA…FAGP), 380–400 (TAII…SILL), 409–429 (AVAG…ILAG), and 455–475 (AFWL…VCYW).

This sequence belongs to the major facilitator superfamily. EmrB family.

It is found in the membrane. Its function is as follows. Major facilitator superfamily transporter that may be involved in A.fumigatus adaptation to azoles such as vorizonazole. In Aspergillus fumigatus (strain ATCC MYA-4609 / CBS 101355 / FGSC A1100 / Af293) (Neosartorya fumigata), this protein is Major facilitator superfamily multidrug transporter mfsC.